A 262-amino-acid polypeptide reads, in one-letter code: MDHNKLYQLLIDDKFFDVVVELTDEEDVLSINAHKIILCASCEYFEKLFTLFREKNQSKITIKVPNRYVVRDIIIGFYKKNIQPCINNWKYQLDLVVCRDFLGLKINSDMIKNVIVPLEGFELLIKVIDLIGFFDETIGIIIRNIPKDYDKSILSDELLDKITNRTEVLNKNMSETESTIQFIVNSSKYQYIKLEMSHKIKYIQEFLEFMCKYDVWDNKDKFLLTVKPIDYKCPCPTKYSDVSFMIKFFTIYLEAKKVNLTN.

One can recognise a BTB domain in the interval 16-86 (FDVVVELTDE…FYKKNIQPCI (71 aa)).

Belongs to the mimivirus BTB/WD family.

This is Putative BTB/POZ domain-containing protein L834 from Acanthamoeba polyphaga (Amoeba).